A 366-amino-acid chain; its full sequence is Uroporphyrinogen decarboxylase (366 aa).

Substrate-binding positions include 28-32, Asp78, Tyr160, Thr215, and His333; that span reads RQAGR.

Belongs to the uroporphyrinogen decarboxylase family. Homodimer.

The protein localises to the cytoplasm. It carries out the reaction uroporphyrinogen III + 4 H(+) = coproporphyrinogen III + 4 CO2. The protein operates within porphyrin-containing compound metabolism; protoporphyrin-IX biosynthesis; coproporphyrinogen-III from 5-aminolevulinate: step 4/4. Its function is as follows. Catalyzes the decarboxylation of four acetate groups of uroporphyrinogen-III to yield coproporphyrinogen-III. This is Uroporphyrinogen decarboxylase from Paraburkholderia phytofirmans (strain DSM 17436 / LMG 22146 / PsJN) (Burkholderia phytofirmans).